The chain runs to 537 residues: Tripeptidyl aminopeptidase (537 aa).

A signal peptide spans Met-1–Ala-36. Residues Ala-37–Ala-39 constitute a propeptide that is removed on maturation. Positions Gly-119 to Gly-497 constitute an AB hydrolase-1 domain. The Nucleophile role is filled by Ser-245. Residue Asp-470 is part of the active site. Catalysis depends on His-499, which acts as the Proton donor.

The protein belongs to the peptidase S33 family.

It localises to the secreted. In terms of biological role, cleaves tripeptides from the N-termini of proteins. Does not cleave mono- or dipeptides, or N-terminally blocked peptides. The protein is Tripeptidyl aminopeptidase of Streptomyces lividans.